The following is a 347-amino-acid chain: MNPLTFTMITSTIILGTSIVITSSHWLTVWIGFEMNMLAIIPVLMKTHHPRSTEAATKYFLIQATASMLLMLAVTINLLSSGQWAVSNMIDPLALTIMTLALAMKLGLSPFHFWVPEVTQGVPLLSGLILLTWQKLAPLSILCTLSPNIDPTLILTMSILSVLVGGWGGLNQTQLRKIMAYSSISHMGWMTAILIYNPSLTILNLLLYIMMTSTTFILLIITSSTTTLSLSHTWNKTPLIAIIILTTMLSLGGLPPLTGFMPKWMILQDLTKNENIALSLFMAMAALLNLYFYTRLTYTTSLTMLPTTNNTKIKWHFKTTKQAASLSPLIIISTMILPLTPTMSALW.

Helical transmembrane passes span 13–33, 59–79, 84–104, 111–131, 149–169, 178–198, 201–221, 240–260, 276–296, and 326–346; these read IILGTSIVITSSHWLTVWIGF, YFLIQATASMLLMLAVTINLL, WAVSNMIDPLALTIMTLALAM, FHFWVPEVTQGVPLLSGLILL, IDPTLILTMSILSVLVGGWGG, IMAYSSISHMGWMTAILIYNP, TILNLLLYIMMTSTTFILLII, IAIIILTTMLSLGGLPPLTGF, IALSLFMAMAALLNLYFYTRL, and LSPLIIISTMILPLTPTMSAL.

The protein belongs to the complex I subunit 2 family. Core subunit of respiratory chain NADH dehydrogenase (Complex I) which is composed of 45 different subunits. Interacts with TMEM242.

Its subcellular location is the mitochondrion inner membrane. The catalysed reaction is a ubiquinone + NADH + 5 H(+)(in) = a ubiquinol + NAD(+) + 4 H(+)(out). Core subunit of the mitochondrial membrane respiratory chain NADH dehydrogenase (Complex I) that is believed to belong to the minimal assembly required for catalysis. Complex I functions in the transfer of electrons from NADH to the respiratory chain. The immediate electron acceptor for the enzyme is believed to be ubiquinone. The polypeptide is NADH-ubiquinone oxidoreductase chain 2 (Chrotopterus auritus (Peters's woolly false vampire bat)).